The sequence spans 253 residues: 5-oxoprolinase subunit A (253 aa).

Belongs to the LamB/PxpA family. As to quaternary structure, forms a complex composed of PxpA, PxpB and PxpC.

The enzyme catalyses 5-oxo-L-proline + ATP + 2 H2O = L-glutamate + ADP + phosphate + H(+). Catalyzes the cleavage of 5-oxoproline to form L-glutamate coupled to the hydrolysis of ATP to ADP and inorganic phosphate. The sequence is that of 5-oxoprolinase subunit A from Bacillus cereus (strain ATCC 10987 / NRS 248).